A 389-amino-acid chain; its full sequence is Succinate--CoA ligase [ADP-forming] subunit beta (389 aa).

The region spanning 9-244 (KQLLAEYGIP…KTQEDETEVT (236 aa)) is the ATP-grasp domain. Residues lysine 46, 53–55 (GRG), glycine 102, and glutamate 107 contribute to the ATP site. Residues asparagine 199 and aspartate 213 each coordinate Mg(2+). Residues asparagine 264 and 321–323 (GIV) each bind substrate.

Belongs to the succinate/malate CoA ligase beta subunit family. As to quaternary structure, heterotetramer of two alpha and two beta subunits. Requires Mg(2+) as cofactor.

The enzyme catalyses succinate + ATP + CoA = succinyl-CoA + ADP + phosphate. It carries out the reaction GTP + succinate + CoA = succinyl-CoA + GDP + phosphate. It functions in the pathway carbohydrate metabolism; tricarboxylic acid cycle; succinate from succinyl-CoA (ligase route): step 1/1. Succinyl-CoA synthetase functions in the citric acid cycle (TCA), coupling the hydrolysis of succinyl-CoA to the synthesis of either ATP or GTP and thus represents the only step of substrate-level phosphorylation in the TCA. The beta subunit provides nucleotide specificity of the enzyme and binds the substrate succinate, while the binding sites for coenzyme A and phosphate are found in the alpha subunit. The chain is Succinate--CoA ligase [ADP-forming] subunit beta from Xanthomonas euvesicatoria pv. vesicatoria (strain 85-10) (Xanthomonas campestris pv. vesicatoria).